A 229-amino-acid chain; its full sequence is RNA chaperone ProQ (229 aa).

Residues 105 to 178 (EAKARVQAQR…PREEKHTPVS (74 aa)) are disordered. The segment covering 117–136 (QQAKKREAAAAAGDKESAPR) has biased composition (basic and acidic residues). Basic residues predominate over residues 137-146 (RERKPRPAAP). Over residues 147–176 (RRKEGAERKPRAEKPAAKAPRAPREEKHTP) the composition is skewed to basic and acidic residues.

Belongs to the ProQ family.

The protein resides in the cytoplasm. Its function is as follows. RNA chaperone with significant RNA binding, RNA strand exchange and RNA duplexing activities. May regulate ProP activity through an RNA-based, post-transcriptional mechanism. The polypeptide is RNA chaperone ProQ (Escherichia fergusonii (strain ATCC 35469 / DSM 13698 / CCUG 18766 / IAM 14443 / JCM 21226 / LMG 7866 / NBRC 102419 / NCTC 12128 / CDC 0568-73)).